Consider the following 143-residue polypeptide: MQEIMQFVGRHPILSIAWIALLVAVLVTTFKSLTSKVKVITRGEATRLINKEDAVVVDLRQRDDFRKGHIAGSINLLPSEIKANNVGELEKHKDKPVIVVDGSGMQCQEPANALTKAGFAQVFVLKEGVAGWAGENLPLVRGK.

The 94-residue stretch at 50–143 folds into the Rhodanese domain; the sequence is NKEDAVVVDL…GENLPLVRGK (94 aa). Residue Lys-91 is modified to N6-acetyllysine.

This is an uncharacterized protein from Escherichia coli O6:H1 (strain CFT073 / ATCC 700928 / UPEC).